The primary structure comprises 511 residues: uncharacterized protein (511 aa).

The CoA carboxyltransferase N-terminal domain occupies 2 to 254 (LMDYEKERTE…NFQEKAPIHE (253 aa)). The segment at 2–506 (LMDYEKERTE…KEMTFTNRKH (505 aa)) is carboxyltransferase. A CoA carboxyltransferase C-terminal domain is found at 260-506 (HFETPLADVI…KEMTFTNRKH (247 aa)).

Belongs to the AccD/PCCB family.

This is an uncharacterized protein from Bacillus subtilis (strain 168).